Reading from the N-terminus, the 800-residue chain is Blood-group-substance endo-1,4-beta-galactosidase (800 aa).

An N-terminal signal peptide occupies residues 1 to 35; sequence MGGVTMKNNLKKYIKYILSVILVFFVGVNGMEVYA.

It belongs to the glycosyl hydrolase 98 family.

Its subcellular location is the secreted. The enzyme catalyses Endohydrolysis of (1-&gt;4)-beta-D-galactosidic linkages in blood group A and B substances.. In terms of biological role, endo-beta-galactosidase capable of releasing both the blood group A trisaccharide (A-Tri; GalNAcalpha1--&gt;3(Fucalpha1--&gt;2)Gal) and B trisaccharide (B-Tri; Galalpha1--&gt;3(Fucalpha1--&gt;2)Gal) glycotopes from blood group A- and B-containing glycoconjugates, respectively. The chain is Blood-group-substance endo-1,4-beta-galactosidase (eabC) from Clostridium perfringens.